Consider the following 245-residue polypeptide: tRNA pseudouridine synthase A (245 aa).

The active-site Nucleophile is the D52. Residue Y111 participates in substrate binding.

Belongs to the tRNA pseudouridine synthase TruA family. Homodimer.

It carries out the reaction uridine(38/39/40) in tRNA = pseudouridine(38/39/40) in tRNA. In terms of biological role, formation of pseudouridine at positions 38, 39 and 40 in the anticodon stem and loop of transfer RNAs. The chain is tRNA pseudouridine synthase A from Thermotoga maritima (strain ATCC 43589 / DSM 3109 / JCM 10099 / NBRC 100826 / MSB8).